The primary structure comprises 383 residues: GA-binding protein subunit beta-1 (383 aa).

At serine 2 the chain carries N-acetylserine. ANK repeat units lie at residues 5–34 (DLGK…PFTT) and 37–66 (LGTS…SRDA). Lysine 69 is subject to N6-acetyllysine. 3 ANK repeats span residues 70-99 (VDRT…DVNA), 103-132 (LKMT…DVHT), and 136-166 (FCKT…QINT). An N6-acetyllysine mark is found at lysine 340 and lysine 369.

As to quaternary structure, heterotetramer of two alpha and two beta subunits. Interacts with HCFC1, causing repression of transcriptional activity. Acetylated by EP300/p300. Deacetylated by SIRT7, promoting heterotetramerization and activity.

It localises to the nucleus. Transcription factor capable of interacting with purine rich repeats (GA repeats). Acts as a master regulator of nuclear-encoded mitochondrial genes. In Bos taurus (Bovine), this protein is GA-binding protein subunit beta-1 (GABPB1).